Reading from the N-terminus, the 290-residue chain is 33 kDa chaperonin (290 aa).

2 disulfides stabilise this stretch: C235–C237 and C268–C271.

This sequence belongs to the HSP33 family. Post-translationally, under oxidizing conditions two disulfide bonds are formed involving the reactive cysteines. Under reducing conditions zinc is bound to the reactive cysteines and the protein is inactive.

It localises to the cytoplasm. Functionally, redox regulated molecular chaperone. Protects both thermally unfolding and oxidatively damaged proteins from irreversible aggregation. Plays an important role in the bacterial defense system toward oxidative stress. The polypeptide is 33 kDa chaperonin (Streptococcus pneumoniae (strain P1031)).